The chain runs to 202 residues: Nucleoside triphosphate pyrophosphatase (202 aa).

D79 (proton acceptor) is an active-site residue.

Belongs to the Maf family. A divalent metal cation serves as cofactor.

The protein localises to the cytoplasm. The enzyme catalyses a ribonucleoside 5'-triphosphate + H2O = a ribonucleoside 5'-phosphate + diphosphate + H(+). It catalyses the reaction a 2'-deoxyribonucleoside 5'-triphosphate + H2O = a 2'-deoxyribonucleoside 5'-phosphate + diphosphate + H(+). Nucleoside triphosphate pyrophosphatase. May have a dual role in cell division arrest and in preventing the incorporation of modified nucleotides into cellular nucleic acids. This chain is Nucleoside triphosphate pyrophosphatase, found in Nitrobacter winogradskyi (strain ATCC 25391 / DSM 10237 / CIP 104748 / NCIMB 11846 / Nb-255).